Here is a 334-residue protein sequence, read N- to C-terminus: Ribosomal RNA small subunit methyltransferase C (334 aa).

It belongs to the methyltransferase superfamily. RsmC family. As to quaternary structure, monomer.

The protein resides in the cytoplasm. The catalysed reaction is guanosine(1207) in 16S rRNA + S-adenosyl-L-methionine = N(2)-methylguanosine(1207) in 16S rRNA + S-adenosyl-L-homocysteine + H(+). Specifically methylates the guanine in position 1207 of 16S rRNA in the 30S particle. The polypeptide is Ribosomal RNA small subunit methyltransferase C (Idiomarina loihiensis (strain ATCC BAA-735 / DSM 15497 / L2-TR)).